A 160-amino-acid chain; its full sequence is MLKIERLLINFKTLEEFKRFKEYGMQELSMLEDLQDNIIENDSTSPFYGIYFGDKLVARMSLYQVNGGTNPYFDQRQDFLELWKLEVLPGYQNNGYGKALVDFAKSFRMPIRTNSRMKSADFWDKMNFEPVKYDMARDKGENPYIWHPDMDGEMTSGETA.

Positions 7–151 (LLINFKTLEE…NPYIWHPDMD (145 aa)) constitute an N-acetyltransferase domain.

This is an uncharacterized protein from Bacillus velezensis (strain DSM 23117 / BGSC 10A6 / LMG 26770 / FZB42) (Bacillus amyloliquefaciens subsp. plantarum).